The sequence spans 371 residues: NADH-ubiquinone oxidoreductase chain 1 (371 aa).

10 helical membrane passes run 7-27 (IISI…VAYV), 44-64 (PNAV…KLLL), 77-97 (LFFL…AVIP), 109-129 (LGIL…LLAG), 153-173 (LVLS…NLGV), 180-200 (AVLF…GSIA), 226-246 (AVVF…MCIL), 263-283 (VFNI…NWMV), 302-322 (GWLY…IFIL), and 338-358 (FCWT…PCIL).

It belongs to the complex I subunit 1 family.

The protein localises to the mitochondrion inner membrane. The enzyme catalyses a ubiquinone + NADH + 5 H(+)(in) = a ubiquinol + NAD(+) + 4 H(+)(out). Core subunit of the mitochondrial membrane respiratory chain NADH dehydrogenase (Complex I) that is believed to belong to the minimal assembly required for catalysis. Complex I functions in the transfer of electrons from NADH to the respiratory chain. The immediate electron acceptor for the enzyme is believed to be ubiquinone. The protein is NADH-ubiquinone oxidoreductase chain 1 (ndh-1) of Neurospora crassa (strain ATCC 24698 / 74-OR23-1A / CBS 708.71 / DSM 1257 / FGSC 987).